Reading from the N-terminus, the 429-residue chain is Glutamyl-tRNA reductase (429 aa).

Substrate is bound by residues 49-52 (TCNR), Ser-107, 112-114 (EPQ), and Gln-118. The active-site Nucleophile is the Cys-50. Residue 187–192 (GAGKTI) coordinates NADP(+).

It belongs to the glutamyl-tRNA reductase family. As to quaternary structure, homodimer.

It carries out the reaction (S)-4-amino-5-oxopentanoate + tRNA(Glu) + NADP(+) = L-glutamyl-tRNA(Glu) + NADPH + H(+). It participates in porphyrin-containing compound metabolism; protoporphyrin-IX biosynthesis; 5-aminolevulinate from L-glutamyl-tRNA(Glu): step 1/2. In terms of biological role, catalyzes the NADPH-dependent reduction of glutamyl-tRNA(Glu) to glutamate 1-semialdehyde (GSA). The chain is Glutamyl-tRNA reductase from Marinobacter nauticus (strain ATCC 700491 / DSM 11845 / VT8) (Marinobacter aquaeolei).